A 695-amino-acid polypeptide reads, in one-letter code: Elongation factor G (695 aa).

A tr-type G domain is found at 8–282 (EKTRNIGIMA…AVLDYLPAPT (275 aa)). GTP contacts are provided by residues 17–24 (AHIDAGKT), 81–85 (DTPGH), and 135–138 (NKMD).

The protein belongs to the TRAFAC class translation factor GTPase superfamily. Classic translation factor GTPase family. EF-G/EF-2 subfamily.

It localises to the cytoplasm. Functionally, catalyzes the GTP-dependent ribosomal translocation step during translation elongation. During this step, the ribosome changes from the pre-translocational (PRE) to the post-translocational (POST) state as the newly formed A-site-bound peptidyl-tRNA and P-site-bound deacylated tRNA move to the P and E sites, respectively. Catalyzes the coordinated movement of the two tRNA molecules, the mRNA and conformational changes in the ribosome. This chain is Elongation factor G, found in Listeria monocytogenes serotype 4b (strain CLIP80459).